Here is a 469-residue protein sequence, read N- to C-terminus: Cholesterol 7-desaturase nvd (469 aa).

Positions 1–25 (MASFCASKFLPGLLMLGLGLAVALA) are cleaved as a signal peptide. A helical transmembrane segment spans residues 58 to 78 (NFVASQTLLTLTIFGVASFIL). In terms of domain architecture, Rieske spans 132–238 (IPLVASQDLV…VIEQNGFVLV (107 aa)). [2Fe-2S] cluster-binding residues include Cys-172, His-174, Cys-192, and His-195.

It belongs to the cholesterol 7-desaturase family. [2Fe-2S] cluster is required as a cofactor.

It localises to the membrane. The catalysed reaction is cholesterol + NADPH + O2 + H(+) = 7-dehydrocholesterol + NADP(+) + 2 H2O. It carries out the reaction cholesterol + NADH + O2 + H(+) = 7-dehydrocholesterol + NAD(+) + 2 H2O. Its pathway is steroid hormone biosynthesis; dafachronic acid biosynthesis. Functionally, catalyzes the production of 7-dehydrocholesterol (7-DHC or cholesta-5,7-dien-3beta-ol) by inserting a double bond (desaturating) at the C7-C8 single bond of cholesterol. Essential regulator of steroid biosynthesis as this reaction is the first step in the synthesis of the steroid hormone Delta(7)-dafachronic acid. The chain is Cholesterol 7-desaturase nvd from Hemicentrotus pulcherrimus (Sea urchin).